A 620-amino-acid polypeptide reads, in one-letter code: Chaperone protein HscA homolog (620 aa).

This sequence belongs to the heat shock protein 70 family.

Chaperone involved in the maturation of iron-sulfur cluster-containing proteins. Has a low intrinsic ATPase activity which is markedly stimulated by HscB. The sequence is that of Chaperone protein HscA homolog from Pseudomonas entomophila (strain L48).